We begin with the raw amino-acid sequence, 145 residues long: Large ribosomal subunit protein uL24 (145 aa).

The disordered stretch occupies residues 108 to 145; the sequence is EPIQEEQQKTEETKQEIAPEEVEAKEAQDKQEVKENDQ. A compositionally biased stretch (basic and acidic residues) spans 113–145; that stretch reads EQQKTEETKQEIAPEEVEAKEAQDKQEVKENDQ.

This sequence belongs to the universal ribosomal protein uL24 family. In terms of assembly, part of the 50S ribosomal subunit.

In terms of biological role, one of two assembly initiator proteins, it binds directly to the 5'-end of the 23S rRNA, where it nucleates assembly of the 50S subunit. Located at the polypeptide exit tunnel on the outside of the subunit. This is Large ribosomal subunit protein uL24 (rpl24) from Thermoplasma volcanium (strain ATCC 51530 / DSM 4299 / JCM 9571 / NBRC 15438 / GSS1).